A 159-amino-acid chain; its full sequence is Photosystem II extrinsic protein U, chloroplastic (159 aa).

The protein belongs to the PsbU family. As to quaternary structure, PSII is composed of 1 copy each of membrane proteins PsbA, PsbB, PsbC, PsbD, PsbE, PsbF, PsbH, PsbI, PsbJ, PsbK, PsbL, PsbM, PsbT, PsbX, PsbY, PsbZ, Psb30/Ycf12, at least 3 peripheral proteins of the oxygen-evolving complex and a large number of cofactors. It forms dimeric complexes. Part of the oxygen-evolving complex of photosystem II.

It is found in the plastid. The protein localises to the chloroplast thylakoid membrane. In terms of biological role, one of the extrinsic, lumenal subunits of photosystem II (PSII). PSII is a light-driven water plastoquinone oxidoreductase, using light energy to abstract electrons from H(2)O, generating a proton gradient subsequently used for ATP formation. The extrinsic proteins stabilize the structure of photosystem II oxygen-evolving complex (OEC), the ion environment of oxygen evolution and protect the OEC against heat-induced inactivation. This is Photosystem II extrinsic protein U, chloroplastic from Karenia brevis (Red tide dinoflagellate).